The primary structure comprises 388 residues: 4-hydroxy-tetrahydrodipicolinate synthase 1, chloroplastic (388 aa).

The interval methionine 1–alanine 51 is disordered. The N-terminal 62 residues, methionine 1 to alanine 62, are a transit peptide targeting the chloroplast. Threonine 131 contacts pyruvate. The active-site Proton donor/acceptor is tyrosine 217. Lysine 245 functions as the Schiff-base intermediate with substrate in the catalytic mechanism. Isoleucine 284 contacts pyruvate.

The protein belongs to the DapA family. Tetramer of modified subunits derived from two genes in different combinations.

The protein localises to the plastid. The protein resides in the chloroplast. The catalysed reaction is L-aspartate 4-semialdehyde + pyruvate = (2S,4S)-4-hydroxy-2,3,4,5-tetrahydrodipicolinate + H2O + H(+). The protein operates within amino-acid biosynthesis; L-lysine biosynthesis via DAP pathway; (S)-tetrahydrodipicolinate from L-aspartate: step 3/4. With respect to regulation, sensitive to lysine inhibition. This inhibition increase in an allosteric manner with increasing concentration of the inhibitor. In terms of biological role, catalyzes the condensation of (S)-aspartate-beta-semialdehyde [(S)-ASA] and pyruvate to 4-hydroxy-tetrahydrodipicolinate (HTPA). This chain is 4-hydroxy-tetrahydrodipicolinate synthase 1, chloroplastic, found in Triticum aestivum (Wheat).